Here is a 338-residue protein sequence, read N- to C-terminus: Mitoferrin-1 (338 aa).

Positions 1 to 42 (MELRSGSVGSQAVARRMDGDSRDGGGGKDATGSEDYENLPTS) are disordered. The span at 15–26 (RRMDGDSRDGGG) shows a compositional bias: basic and acidic residues. Solcar repeat units follow at residues 43–131 (ASVS…MKRT), 141–225 (NSHL…LQEQ), and 232–326 (YNPQ…FKYF). 6 consecutive transmembrane segments (helical) span residues 45–64 (VSTH…SVMY), 106–125 (GVNV…FACY), 143–162 (HLAN…AVMN), 200–219 (SYTT…FITY), 234–253 (PQSH…AATT), and 301–320 (GIQA…WSVY).

It belongs to the mitochondrial carrier (TC 2.A.29) family. In terms of assembly, interacts with ACB10; this interaction stabilizes SLC25A37 and enhances the function of SLC25A37 to import mitochondrial iron during erythroid differentiation.

It localises to the mitochondrion inner membrane. It catalyses the reaction Fe(2+)(in) = Fe(2+)(out). Its function is as follows. Mitochondrial iron transporter that specifically mediates iron uptake in developing erythroid cells, thereby playing an essential role in heme biosynthesis. This Homo sapiens (Human) protein is Mitoferrin-1 (SLC25A37).